Here is a 101-residue protein sequence, read N- to C-terminus: Replication restart protein PriB (101 aa).

In terms of domain architecture, SSB spans 1 to 101 (MTTNNLVLAG…LHAENVELKT (101 aa)).

It belongs to the PriB family. Homodimer. Interacts with PriA and DnaT. Component of the replication restart primosome. Primosome assembly occurs via a 'hand-off' mechanism. PriA binds to replication forks, subsequently PriB then DnaT bind; DnaT then displaces ssDNA to generate the helicase loading substrate.

Its function is as follows. Involved in the restart of stalled replication forks, which reloads the replicative helicase on sites other than the origin of replication; the PriA-PriB pathway is the major replication restart pathway. During primosome assembly it facilitates complex formation between PriA and DnaT on DNA; stabilizes PriA on DNA. Stimulates the DNA unwinding activity of PriA helicase. The sequence is that of Replication restart protein PriB from Shewanella halifaxensis (strain HAW-EB4).